A 734-amino-acid polypeptide reads, in one-letter code: Cell surface glycoprotein gp138B (734 aa).

Positions 1–20 are cleaved as a signal peptide; it reads MKIILTLSIFLICFLQLGQS. 16 N-linked (GlcNAc...) asparagine glycosylation sites follow: Asn-58, Asn-89, Asn-124, Asn-198, Asn-224, Asn-392, Asn-420, Asn-435, Asn-482, Asn-498, Asn-523, Asn-596, Asn-605, Asn-614, Asn-621, and Asn-630. In terms of domain architecture, IPT/TIG spans 504–592; that stretch reads PFIKSYGFLE…SSNEVTFYYF (89 aa). A disordered region spans residues 678-712; that stretch reads GETPTPSTTPSTTPSTTPSTTPSSTPTQSPGDDGS. The span at 680–712 shows a compositional bias: low complexity; sequence TPTPSTTPSTTPSTTPSTTPSSTPTQSPGDDGS. 4 tandem repeats follow at residues 683–686, 687–690, 691–694, and 695–698. The 4 X 4 AA tandem repeats of P-S-T-T stretch occupies residues 683 to 698; that stretch reads PSTTPSTTPSTTPSTT. Gly-708 is lipidated: GPI-like-anchor amidated glycine. Residues 709-734 constitute a propeptide, removed in mature form; it reads DDGSTSSTLSISFYLITLLLLTQQFI.

In terms of processing, the sugar chains may play important roles in cell fusion. Post-translationally, the GPI-like-anchor contains a phosphoceramide group, rather than a phosphatidyl group.

It localises to the cell membrane. Its function is as follows. Involved in the sexual cell fusion of D.discoideum. The protein is Cell surface glycoprotein gp138B (GP138B) of Dictyostelium discoideum (Social amoeba).